Reading from the N-terminus, the 2282-residue chain is Acetyl-CoA carboxylase (2282 aa).

Residues 16–515 (NIEKILIANN…HTGWLDQLIS (500 aa)) enclose the Biotin carboxylation domain. The 191-residue stretch at 170-360 (YSECNGVPSE…LPATQLQIAM (191 aa)) folds into the ATP-grasp domain. 196–253 (AQRVGFPAMIKASEGGGGKGIRKVTSMEDLESSFRQVQNEVPGSPIFFMKLVSNARHL) contacts ATP. The Mn(2+) site is built by E319, E331, and N333. Residue R335 is part of the active site. The region spanning 646–720 (FSQEYDPSIL…APGAIIANLE (75 aa)) is the Biotinyl-binding domain. The residue at position 687 (K687) is an N6-biotinyllysine. A compositionally biased stretch (low complexity) spans 1109 to 1129 (GSNSGSPTYGSPLIRSISSSG). The disordered stretch occupies residues 1109-1141 (GSNSGSPTYGSPLIRSISSSGGSSGGSGFQISP). The CoA carboxyltransferase N-terminal domain occupies 1495-1851 (PYPIMDAVQR…SGGEMVPIIS (357 aa)). The carboxyltransferase stretch occupies residues 1495–2178 (PYPIMDAVQR…EEDKLKLIDK (684 aa)). The CoA site is built by R1761, K2068, and R2070. Residues 1852–2178 (PIDSPHRDIE…EEDKLKLIDK (327 aa)) form the CoA carboxyltransferase C-terminal domain.

Biotin serves as cofactor. It depends on Mn(2+) as a cofactor.

The protein localises to the cytoplasm. It carries out the reaction hydrogencarbonate + acetyl-CoA + ATP = malonyl-CoA + ADP + phosphate + H(+). The enzyme catalyses N(6)-biotinyl-L-lysyl-[protein] + hydrogencarbonate + ATP = N(6)-carboxybiotinyl-L-lysyl-[protein] + ADP + phosphate + H(+). It participates in lipid metabolism; malonyl-CoA biosynthesis; malonyl-CoA from acetyl-CoA: step 1/1. Its function is as follows. Catalyzes the rate-limiting reaction in the biogenesis of long-chain fatty acids. Carries out three functions: biotin carboxyl carrier protein, biotin carboxylase and carboxyltransferase. This chain is Acetyl-CoA carboxylase (accA), found in Dictyostelium discoideum (Social amoeba).